The primary structure comprises 150 residues: MPGPAETQAATLAKFIEGWKTFTPEAWTETWTDDCTQNFLPFTMGVPPRTKPEVLKLLPSLLGVLHNYKLEIYSVLHDASKGKAAIYATSFADTPFGDFKWTNEYAVFLTFSEDGTQVSKLEEMVDTAFYKEFFPKFQKYMIEKGAPANH.

The protein belongs to the avfA family.

The protein operates within secondary metabolite biosynthesis. Functionally, monooxygenase; part of the gene cluster that mediates the biosynthesis of the dimeric xanthones cryptosporioptides. The pathway begins with the synthesis of atrochrysone thioester by the polyketide synthase dmx-nrPKS. The atrochrysone carboxyl ACP thioesterase dmxR1 then breaks the thioester bond and releases the atrochrysone carboxylic acid from dmx-nrPKS. Atrochrysone carboxylic acid is decarboxylated by the decarboxylase dmxR15, and oxidized by the anthrone oxygenase dmxR16 to yield emodin. Emodin is then reduced to emodin hydroquinone by the oxidoreductase dmxR7. A-ring reduction by the short chain dehydrogenase dmxR18, dehydration by the scytalone dehydratase-like protein dmxR17 and probable spontaneous re-oxidation, results in overall deoxygenation to chrysophanol. Baeyer-Villiger oxidation by the Baeyer-Villiger monooxygenase (BVMO) dmxR6 then yields monodictylactone in equilibrium with monodictyphenone. In the case of the cryptosporioptides biosynthesis, monodictylactone is reduced at C-12 to an alcohol (by the short chain dehydrogenases dmxR12 or dmxR8) and hydroxylated at C-5 by dmxR9, yielding the electron-rich aromatic which could eliminate H(2)O to form the ortho-quinonemethide, followed by tautomerisation to paraquinone and complete the formal reduction to produce the 10-methylgroup. Conjugate addition of C-4a-OH to the resulting paraquinone by the monooxygenase dmxR10 then gives cyclohexadienone, which is then reduced at C-5 by the short chain dehydrogenase dmxR3 to give the dihydroxanthone. The 6,7-epoxide in the cryptosporioptides could be introduced by the cytochrome P450 monooxygenase dmxL3. The highly reducing PKS dmxL2 manufactures butyrate, which is further carboxylated by dmxL1 to form ethylmalonate. It is not yet clear whether the carboxylation occurs while the butyrate is attached to the ACP of dmxL2, but this unusual fungal metabolite could then be esterified to O-5 by the O-acetyltransferase dmxR13. Finally, dimerization performed by dmxR5 gives the observed dimers cryptosporioptides A, B and C as the final products of the pathway. This Cryptosporiopsis sp. (strain 8999) protein is Monooxygenase dmxR10.